Here is a 439-residue protein sequence, read N- to C-terminus: Large ribosomal subunit protein mL44 (439 aa).

Disordered regions lie at residues 39–73 and 247–282; these read QSTA…SLPS and KAME…YGNP. The span at 247 to 257 shows a compositional bias: basic and acidic residues; the sequence is KAMEEQDQDKT. Over residues 258 to 274 the composition is skewed to acidic residues; that stretch reads PDEEEAEMVANEQDQDV.

This sequence belongs to the ribonuclease III family. Mitochondrion-specific ribosomal protein mL44 subfamily. As to quaternary structure, component of the mitochondrial large ribosomal subunit (mt-LSU). Mature N.crassa 74S mitochondrial ribosomes consist of a small (37S) and a large (54S) subunit. The 37S small subunit contains a 16S ribosomal RNA (16S mt-rRNA) and 32 different proteins. The 54S large subunit contains a 23S rRNA (23S mt-rRNA) and 42 different proteins. mL44 forms a heterodimer with mL57 and stabilizes rRNA expansion segments 1/2 at a membrane-facing protuberance close to the point of attachment of the ribosome to the translocon in the membrane.

Its subcellular location is the mitochondrion. Its function is as follows. Component of the mitochondrial ribosome (mitoribosome), a dedicated translation machinery responsible for the synthesis of mitochondrial genome-encoded proteins, including at least some of the essential transmembrane subunits of the mitochondrial respiratory chain. The mitoribosomes are attached to the mitochondrial inner membrane and translation products are cotranslationally integrated into the membrane. This is Large ribosomal subunit protein mL44 (mrpl3) from Neurospora crassa (strain ATCC 24698 / 74-OR23-1A / CBS 708.71 / DSM 1257 / FGSC 987).